The following is a 373-amino-acid chain: MHNQSPIIRRKSTRIYVGNVPIGDGAPIAVQSMTNTRTTDVEATVNQIKALERVGVDIVRVSVPTMDAAEAFKLIKQQVNVPLVADIHFDYRIALQVAEYGVDCLRINPGNIGNESRIRSVVDCARDKNIPIRIGVNGGSLEKDIQEKYGEPTPEALLESAMRHVDILDRLNFDQFKVSVKASDVFLAVQSYRLLAARIDQPLHLGITEAGGARSGSVKSAIGLGLLLSEGIGDTLRISLAADPVEEVKVGFDILKSLRIRARGINFIACPTCSRQEFDVIGTVNALEQRLEDIITPMDISIIGCVVNGPGEALVSTLGVTGGHKKSGFYEDGVRQKERFDNEQMIDQLEAKIRAKASMMDESNRIAVNLLEK.

4 residues coordinate [4Fe-4S] cluster: Cys-270, Cys-273, Cys-305, and Glu-312.

Belongs to the IspG family. The cofactor is [4Fe-4S] cluster.

It catalyses the reaction (2E)-4-hydroxy-3-methylbut-2-enyl diphosphate + oxidized [flavodoxin] + H2O + 2 H(+) = 2-C-methyl-D-erythritol 2,4-cyclic diphosphate + reduced [flavodoxin]. It participates in isoprenoid biosynthesis; isopentenyl diphosphate biosynthesis via DXP pathway; isopentenyl diphosphate from 1-deoxy-D-xylulose 5-phosphate: step 5/6. In terms of biological role, converts 2C-methyl-D-erythritol 2,4-cyclodiphosphate (ME-2,4cPP) into 1-hydroxy-2-methyl-2-(E)-butenyl 4-diphosphate. The polypeptide is 4-hydroxy-3-methylbut-2-en-1-yl diphosphate synthase (flavodoxin) (Serratia proteamaculans (strain 568)).